The chain runs to 323 residues: tRNA U34 carboxymethyltransferase (323 aa).

Residues lysine 91, tryptophan 105, lysine 110, glycine 130, 152 to 154 (DPT), 181 to 182 (IE), methionine 196, tyrosine 200, and arginine 315 contribute to the carboxy-S-adenosyl-L-methionine site.

This sequence belongs to the class I-like SAM-binding methyltransferase superfamily. CmoB family. Homotetramer.

It catalyses the reaction carboxy-S-adenosyl-L-methionine + 5-hydroxyuridine(34) in tRNA = 5-carboxymethoxyuridine(34) in tRNA + S-adenosyl-L-homocysteine + H(+). Its function is as follows. Catalyzes carboxymethyl transfer from carboxy-S-adenosyl-L-methionine (Cx-SAM) to 5-hydroxyuridine (ho5U) to form 5-carboxymethoxyuridine (cmo5U) at position 34 in tRNAs. The protein is tRNA U34 carboxymethyltransferase of Shigella flexneri.